Here is a 141-residue protein sequence, read N- to C-terminus: uncharacterized protein (141 aa).

The segment covering methionine 1–serine 39 has biased composition (low complexity). The segment at methionine 1–phenylalanine 48 is disordered. The chain crosses the membrane as a helical span at residues phenylalanine 109–isoleucine 129.

The protein resides in the membrane. This is an uncharacterized protein from Dictyostelium discoideum (Social amoeba).